The following is a 437-amino-acid chain: Purple acid phosphatase 21 (437 aa).

The signal sequence occupies residues 1–25; sequence MKKMKIFGFLISFSLFFLSPFVCQA. An N-linked (GlcNAc...) asparagine glycan is attached at asparagine 30. Fe cation contacts are provided by aspartate 152, aspartate 179, and tyrosine 182. Aspartate 179 lines the Zn(2+) pocket. Zn(2+)-binding residues include asparagine 212 and histidine 296. Substrate is bound at residue asparagine 212. The active-site Proton donor is the histidine 306. Zn(2+) is bound at residue histidine 333. 333–335 lines the substrate pocket; that stretch reads HVH. Histidine 335 provides a ligand contact to Fe cation.

The protein belongs to the metallophosphoesterase superfamily. Purple acid phosphatase family. As to quaternary structure, homodimer. The cofactor is Fe cation. Requires Zn(2+) as cofactor. As to expression, expressed flowers and siliques.

It localises to the secreted. It catalyses the reaction a phosphate monoester + H2O = an alcohol + phosphate. In Arabidopsis thaliana (Mouse-ear cress), this protein is Purple acid phosphatase 21 (PAP21).